Reading from the N-terminus, the 598-residue chain is MALRCPIVSVLGHVDHGKTSLLDKIRKTRVTQREAGGITQHIGASEIPIDIIKKISKDLIKMLGANLTIPGILVIDTPGHAAFTSLRKRGGALADIAVLIVDINEGFMPQTIEALNILKQNKTPFVVAANKIDRLPGWSSVDGAFITNFNEQKQHPNALTEFEIKLYENVIAPLAERGFEADLFSRVKDVSKTINIVPISAMTGEGIPDLLVMISGLAQRFMEQNLKLNVEGYAKGTVLEVKEERGLGKTMDAIIYDGVAKRGDYIVIGNPDGIVVSRIKALLKPKALDEMRDPRDKFKTMNEISAATGLKISAPDLDNIIAGSPLRIVPKNMVEQAKAEIVEEIEETAIQLDEEGIIIKADTLGSLEALATELRKVGAKIKKAEVGDVSKKDVIEASSYAQTNPLNGAIILFNSKLLADAKSEVEKYEIKTFEGDIIYKLVEDYEEWTKEMKELLKSDEFNRLTKPAILRIIPGCIFNKTKPAICGVEVVYGTLRVGCSVVDEQGKRLGTVKEIKDKKQENIKEAKVGMEVPISIDGTVILGRHIGEDDIMYVELPEPEVRILSHNYMGELRGDEREAFERYVELKRKLENNPFWGI.

The tr-type G domain maps to 3 to 223; that stretch reads LRCPIVSVLG…ISGLAQRFME (221 aa). The G1 stretch occupies residues 12–19; sequence GHVDHGKT. 12–19 lines the GTP pocket; that stretch reads GHVDHGKT. The segment at 37–41 is G2; it reads GITQH. Positions 76 to 79 are G3; it reads DTPG. Residues 76-80 and 130-133 each bind GTP; these read DTPGH and NKID. The interval 130–133 is G4; sequence NKID. The tract at residues 200-202 is G5; the sequence is SAM.

It belongs to the TRAFAC class translation factor GTPase superfamily. Classic translation factor GTPase family. IF-2 subfamily.

In terms of biological role, function in general translation initiation by promoting the binding of the formylmethionine-tRNA to ribosomes. Seems to function along with eIF-2. In Methanococcus aeolicus (strain ATCC BAA-1280 / DSM 17508 / OCM 812 / Nankai-3), this protein is Probable translation initiation factor IF-2.